The primary structure comprises 284 residues: Release factor glutamine methyltransferase (284 aa).

S-adenosyl-L-methionine is bound by residues 121 to 125 (GTGTG), Asp144, Trp172, and Asn188. 188-191 (NPPY) lines the substrate pocket.

Belongs to the protein N5-glutamine methyltransferase family. PrmC subfamily.

The catalysed reaction is L-glutaminyl-[peptide chain release factor] + S-adenosyl-L-methionine = N(5)-methyl-L-glutaminyl-[peptide chain release factor] + S-adenosyl-L-homocysteine + H(+). Methylates the class 1 translation termination release factors RF1/PrfA and RF2/PrfB on the glutamine residue of the universally conserved GGQ motif. The chain is Release factor glutamine methyltransferase from Aliivibrio fischeri (strain ATCC 700601 / ES114) (Vibrio fischeri).